Reading from the N-terminus, the 141-residue chain is Ribonuclease P protein component (141 aa).

2 disordered regions span residues 37-56 (RTEEESNAAKTGDNPRVGFT) and 114-141 (RRITAKGERRSGGKRRTERPEPGPVNGK). Over residues 114 to 124 (RRITAKGERRS) the composition is skewed to basic and acidic residues.

This sequence belongs to the RnpA family. As to quaternary structure, consists of a catalytic RNA component (M1 or rnpB) and a protein subunit.

The enzyme catalyses Endonucleolytic cleavage of RNA, removing 5'-extranucleotides from tRNA precursor.. Its function is as follows. RNaseP catalyzes the removal of the 5'-leader sequence from pre-tRNA to produce the mature 5'-terminus. It can also cleave other RNA substrates such as 4.5S RNA. The protein component plays an auxiliary but essential role in vivo by binding to the 5'-leader sequence and broadening the substrate specificity of the ribozyme. This chain is Ribonuclease P protein component, found in Brucella melitensis biotype 2 (strain ATCC 23457).